The primary structure comprises 449 residues: Adenylosuccinate synthetase isozyme 1 B (449 aa).

Residues 34–40 and 62–64 each bind GTP; these read GDEGKGK and GHT. The active-site Proton acceptor is the Asp-35. Mg(2+) contacts are provided by Asp-35 and Gly-62. Residue Asp-35 coordinates substrate. Residues 35 to 38, 60 to 63, Thr-155, Arg-169, Asn-248, Thr-263, and Arg-327 each bind IMP; these read DEGK and NAGH. Residue His-63 is the Proton donor of the active site. 323 to 329 provides a ligand contact to substrate; the sequence is VTTGRKR. Residues Arg-329, 355–357, and 437–440 contribute to the GTP site; these read KLD and GVGK.

This sequence belongs to the adenylosuccinate synthetase family. As to quaternary structure, homodimer. The cofactor is Mg(2+).

The protein localises to the cytoplasm. It carries out the reaction IMP + L-aspartate + GTP = N(6)-(1,2-dicarboxyethyl)-AMP + GDP + phosphate + 2 H(+). Its pathway is purine metabolism; AMP biosynthesis via de novo pathway; AMP from IMP: step 1/2. Functionally, component of the purine nucleotide cycle (PNC), which interconverts IMP and AMP to regulate the nucleotide levels in various tissues, and which contributes to glycolysis and ammoniagenesis. Catalyzes the first committed step in the biosynthesis of AMP from IMP. The chain is Adenylosuccinate synthetase isozyme 1 B (adss1b) from Salmo salar (Atlantic salmon).